Reading from the N-terminus, the 297-residue chain is Urease accessory protein UreD (297 aa).

A disordered region spans residues 1–41 (MPQAADIATAPQRPSAPGDVVAAGQPPRARGRAHVSSKRRD).

Belongs to the UreD family. In terms of assembly, ureD, UreF and UreG form a complex that acts as a GTP-hydrolysis-dependent molecular chaperone, activating the urease apoprotein by helping to assemble the nickel containing metallocenter of UreC. The UreE protein probably delivers the nickel.

It localises to the cytoplasm. Required for maturation of urease via the functional incorporation of the urease nickel metallocenter. In Ruegeria sp. (strain TM1040) (Silicibacter sp.), this protein is Urease accessory protein UreD.